The primary structure comprises 1173 residues: BRCA2-interacting transcriptional repressor EMSY (1173 aa).

One can recognise an ENT domain in the interval 16 to 100 (CKRILRKLEL…EWSIEGRRLV (85 aa)). Residues 149–177 (STTSTPPSASAPSSSSAAVKSPRPASPAS) are compositionally biased toward low complexity. Disordered stretches follow at residues 149–179 (STTS…ASNV), 191–216 (KSVS…SSPV), 676–720 (NRSA…DAPP), 797–816 (SAEQ…ESDA), 905–998 (RVCE…GAQV), 1020–1046 (PRAP…EKPS), and 1139–1173 (DYTS…DQSQ). Residues 683–693 (TTSTHTSAAAA) are compositionally biased toward low complexity. Composition is skewed to low complexity over residues 911–921 (SSSSSSSSSSS) and 937–953 (SSSS…TPHT). Composition is skewed to polar residues over residues 961–976 (QAPT…TQLS) and 989–998 (SSKTSSGAQV). Over residues 1025 to 1040 (SSSSSSEAALKLQAES) the composition is skewed to low complexity. The segment covering 1148 to 1159 (EQAMEQEVDSSN) has biased composition (acidic residues).

In terms of assembly, homodimer.

The protein localises to the nucleus. Functionally, regulator which is able to repress transcription, possibly via its interaction with a multiprotein chromatin remodeling complex that modifies the chromatin. This is BRCA2-interacting transcriptional repressor EMSY from Danio rerio (Zebrafish).